The following is a 164-amino-acid chain: Dihydrofolate reductase (164 aa).

Positions 2 to 162 (NISIIVAMSQ…FYVTFKILKK (161 aa)) constitute a DHFR domain. 6-8 (IVA) serves as a coordination point for substrate. NADP(+) contacts are provided by residues 7-8 (VA) and 15-20 (IGQKNS). Aspartate 28 lines the substrate pocket. 44-47 (GRKT) provides a ligand contact to NADP(+). Arginine 58 contacts substrate. NADP(+)-binding positions include 63–66 (LTRQ) and 96–101 (IGGSNL). Substrate is bound at residue threonine 115.

Belongs to the dihydrofolate reductase family.

It catalyses the reaction (6S)-5,6,7,8-tetrahydrofolate + NADP(+) = 7,8-dihydrofolate + NADPH + H(+). The protein operates within cofactor biosynthesis; tetrahydrofolate biosynthesis; 5,6,7,8-tetrahydrofolate from 7,8-dihydrofolate: step 1/1. Key enzyme in folate metabolism. Catalyzes an essential reaction for de novo glycine and purine synthesis, and for DNA precursor synthesis. This is Dihydrofolate reductase (folA) from Buchnera aphidicola subsp. Baizongia pistaciae (strain Bp).